The chain runs to 347 residues: NADH-ubiquinone oxidoreductase chain 2 (347 aa).

The next 11 helical transmembrane spans lie at 1–21 (MNPLIFTTIVLTIIMGTMIVM), 25–45 (HWLTVWIGFEMNMLAVIPILM), 59–79 (YFLTQATASMLLMLAIIINLL), 96–116 (IIMTLAMAMKLGLSPFHFWVP), 122–142 (IQLSSGLILLTWQKLAPMSIL), 145–165 (IFPTINLNLMLLMSVLSVAIG), 178–198 (IMAYSSIAHMGWMTAIMAYNP), 201–221 (TLLNLVIYILLTTTTFMMFML), 237–257 (APLLTMTILTIMLSMGGLPPL), 276–296 (IITPTIMAVTALLNLYFYMRL), and 326–346 (VSPLIILSTLALPLSPILMLL).

Belongs to the complex I subunit 2 family. Core subunit of respiratory chain NADH dehydrogenase (Complex I) which is composed of 45 different subunits. Interacts with TMEM242.

Its subcellular location is the mitochondrion inner membrane. It carries out the reaction a ubiquinone + NADH + 5 H(+)(in) = a ubiquinol + NAD(+) + 4 H(+)(out). Functionally, core subunit of the mitochondrial membrane respiratory chain NADH dehydrogenase (Complex I) which catalyzes electron transfer from NADH through the respiratory chain, using ubiquinone as an electron acceptor. Essential for the catalytic activity and assembly of complex I. The chain is NADH-ubiquinone oxidoreductase chain 2 from Boneia bidens (Manado fruit bat).